The sequence spans 185 residues: Large ribosomal subunit protein uL10 (185 aa).

Residues L165–E185 form a disordered region.

Belongs to the universal ribosomal protein uL10 family. Part of the ribosomal stalk of the 50S ribosomal subunit. The N-terminus interacts with L11 and the large rRNA to form the base of the stalk. The C-terminus forms an elongated spine to which L12 dimers bind in a sequential fashion forming a multimeric L10(L12)X complex.

In terms of biological role, forms part of the ribosomal stalk, playing a central role in the interaction of the ribosome with GTP-bound translation factors. This Streptomyces griseus subsp. griseus (strain JCM 4626 / CBS 651.72 / NBRC 13350 / KCC S-0626 / ISP 5235) protein is Large ribosomal subunit protein uL10.